The sequence spans 299 residues: MSLSKASQPSVKSACVRLPIVVLEPNLAELSTSYVGLVSCKCSVLTCSMMRKMKAFTNTVWLFGNPNNPLHALEPAVEQLLDEYSGDLGSYSQQEKSALRWPSGKPSVHFLQAAHLFFSLKNTWAVETGQENWRGFFHRITSGKKYKFEGDMVIDSCYKIDERRRRMGLPDTFITGLNPIMDVALLQIESLLRVRGLTLNYHLFTSSFLDKPLLDSLYFAIWRDKKKDDGSYSQDEGARQDDPLNPLDELLYLSDLPKPLAHYLNKCPLHNIIMHDEEVREAYLNPIWGKDWPALSSSP.

The involved in inclusion bodies formation stretch occupies residues 66–69 (PNNP). Positions 148–220 (FEGDMVIDSC…KPLLDSLYFA (73 aa)) are interaction with host TNIP2.

Belongs to the Bandavirus NS-S protein family. As to quaternary structure, interacts with host TBK1; this interaction antagonizes TBK1 phosphorylation and inhibits TBK1-IRF3 interaction. Interacts with host STAT2; this interaction blocks the nuclear translocation and activation of host STAT2. Interacts with host TNIP2.

It is found in the host cytoplasm. Plays a role in the inhibition of host RLR-induced interferon-beta activation by inhibiting the phosphorylation of TANK-binding kinase 1/TBK1, thereby blocking IRF3 activation and preventing the establishment of an antiviral state. Also blocks IFN-triggered nuclear translocation and activation of host STAT2. In Alces americanus (American moose), this protein is Non-structural protein NS-S (NSS).